A 296-amino-acid chain; its full sequence is Cytidine deaminase (296 aa).

2 CMP/dCMP-type deaminase domains span residues 47–167 and 186–296; these read TEAE…FGPK and DSAD…IDPV. 88–90 serves as a coordination point for substrate; it reads NLE. H101 contacts Zn(2+). Residue E103 is the Proton donor of the active site. Zn(2+) contacts are provided by C128 and C131.

The protein belongs to the cytidine and deoxycytidylate deaminase family. As to quaternary structure, homodimer. Requires Zn(2+) as cofactor.

It catalyses the reaction cytidine + H2O + H(+) = uridine + NH4(+). The enzyme catalyses 2'-deoxycytidine + H2O + H(+) = 2'-deoxyuridine + NH4(+). In terms of biological role, this enzyme scavenges exogenous and endogenous cytidine and 2'-deoxycytidine for UMP synthesis. The polypeptide is Cytidine deaminase (Shewanella baltica (strain OS155 / ATCC BAA-1091)).